The following is a 177-amino-acid chain: Large ribosomal subunit protein uL6 (177 aa).

This sequence belongs to the universal ribosomal protein uL6 family. In terms of assembly, part of the 50S ribosomal subunit.

Functionally, this protein binds to the 23S rRNA, and is important in its secondary structure. It is located near the subunit interface in the base of the L7/L12 stalk, and near the tRNA binding site of the peptidyltransferase center. This Rickettsia akari (strain Hartford) protein is Large ribosomal subunit protein uL6.